Here is a 118-residue protein sequence, read N- to C-terminus: Small ribosomal subunit protein uS13 (118 aa).

The interval 94-118 (GLPVRGQRTRTNARTRKGPRKAIKK) is disordered.

Belongs to the universal ribosomal protein uS13 family. As to quaternary structure, part of the 30S ribosomal subunit. Forms a loose heterodimer with protein S19. Forms two bridges to the 50S subunit in the 70S ribosome.

Its function is as follows. Located at the top of the head of the 30S subunit, it contacts several helices of the 16S rRNA. In the 70S ribosome it contacts the 23S rRNA (bridge B1a) and protein L5 of the 50S subunit (bridge B1b), connecting the 2 subunits; these bridges are implicated in subunit movement. Contacts the tRNAs in the A and P-sites. This is Small ribosomal subunit protein uS13 from Thiobacillus denitrificans (strain ATCC 25259 / T1).